The following is a 271-amino-acid chain: MPALDDIKSSWADEVESDSGSLPPPSEVIENGQKIVTEYKYNKDDKKVKVVRTYKISRVVVPKCVARRKSLAKFGDSATDRPGPNPQTTMVSEDVFMQFITNKEEEQKNENALDSMKNIVKCRTCEGEHWSFHCPYKNSAYDKPTKPTTAPVPETTSSSKPGKYVPPHMKESQGKPGIGGAMRGRDDTSAIRISNLSEAMTEADLEELVKKFGPHTKMFLSRDKSTGLCKGFAYVHFRSRRDAATAIEVLNGYGYDHLILSVEWSKPQNPQ.

2 disordered regions span residues 1 to 29 (MPAL…SEVI) and 143 to 185 (KPTK…MRGR). An RRM domain is found at 189–267 (SAIRISNLSE…LILSVEWSKP (79 aa)).

It belongs to the eIF-3 subunit G family. In terms of assembly, component of the eukaryotic translation initiation factor 3 (eIF-3) complex.

The protein resides in the cytoplasm. Its function is as follows. RNA-binding component of the eukaryotic translation initiation factor 3 (eIF-3) complex, which is involved in protein synthesis of a specialized repertoire of mRNAs and, together with other initiation factors, stimulates binding of mRNA and methionyl-tRNAi to the 40S ribosome. The eIF-3 complex specifically targets and initiates translation of a subset of mRNAs involved in cell proliferation. This subunit can bind 18S rRNA. This chain is Eukaryotic translation initiation factor 3 subunit G, found in Anopheles gambiae (African malaria mosquito).